Consider the following 137-residue polypeptide: Nucleoside diphosphate kinase (137 aa).

The ATP site is built by Lys9, Phe57, Arg85, Thr91, Arg102, and Asn112. His115 (pros-phosphohistidine intermediate) is an active-site residue.

This sequence belongs to the NDK family. As to quaternary structure, homotetramer. Requires Mg(2+) as cofactor.

The protein localises to the cytoplasm. It catalyses the reaction a 2'-deoxyribonucleoside 5'-diphosphate + ATP = a 2'-deoxyribonucleoside 5'-triphosphate + ADP. The enzyme catalyses a ribonucleoside 5'-diphosphate + ATP = a ribonucleoside 5'-triphosphate + ADP. In terms of biological role, major role in the synthesis of nucleoside triphosphates other than ATP. The ATP gamma phosphate is transferred to the NDP beta phosphate via a ping-pong mechanism, using a phosphorylated active-site intermediate. The protein is Nucleoside diphosphate kinase of Campylobacter hominis (strain ATCC BAA-381 / DSM 21671 / CCUG 45161 / LMG 19568 / NCTC 13146 / CH001A).